The primary structure comprises 246 residues: ATP synthase subunit b 1 (246 aa).

A helical transmembrane segment spans residues 5–27; that stretch reads WFTFTAQVINFLVLVGLLRYFLY.

This sequence belongs to the ATPase B chain family. F-type ATPases have 2 components, F(1) - the catalytic core - and F(0) - the membrane proton channel. F(1) has five subunits: alpha(3), beta(3), gamma(1), delta(1), epsilon(1). F(0) has three main subunits: a(1), b(2) and c(10-14). The alpha and beta chains form an alternating ring which encloses part of the gamma chain. F(1) is attached to F(0) by a central stalk formed by the gamma and epsilon chains, while a peripheral stalk is formed by the delta and b chains.

The protein localises to the cell inner membrane. Functionally, f(1)F(0) ATP synthase produces ATP from ADP in the presence of a proton or sodium gradient. F-type ATPases consist of two structural domains, F(1) containing the extramembraneous catalytic core and F(0) containing the membrane proton channel, linked together by a central stalk and a peripheral stalk. During catalysis, ATP synthesis in the catalytic domain of F(1) is coupled via a rotary mechanism of the central stalk subunits to proton translocation. In terms of biological role, component of the F(0) channel, it forms part of the peripheral stalk, linking F(1) to F(0). This Rhodopirellula baltica (strain DSM 10527 / NCIMB 13988 / SH1) protein is ATP synthase subunit b 1.